The chain runs to 263 residues: LIM and SH3 domain protein 1 (263 aa).

M1 is subject to N-acetylmethionine. One can recognise an LIM zinc-binding domain in the interval 3-63 (PNCARCGKIV…NAHYPKQSFT (61 aa)). Position 42 is an N6-acetyllysine (K42). Nebulin repeat units lie at residues 64 to 95 (MVAD…KNKG) and 97 to 131 (GFSV…KSRM). T68 bears the Phosphothreonine mark. The residue at position 75 (K75) is an N6-methyllysine. At S99 the chain carries Phosphoserine. At T104 the chain carries Phosphothreonine. K112 carries the N6-succinyllysine modification. S118 and S134 each carry phosphoserine. The segment at 122-207 (YHEEFEKSRM…QRSAPGGGGK (86 aa)) is disordered. The segment covering 148 to 162 (DSSSYRRPTEQQQPQ) has biased composition (polar residues). The SH3 domain maps to 204–263 (GGGKRYRAVYDYSAADEDEVSFQDGDTIVNVQQIDDGWMYGTVERTGDTGMLPANYVEAI).

Interacts with F-actin. Interacts with ANKRD54. Interacts with KBTBD10. Post-translationally, phosphorylated. Expressed in a wide range of tissues (but not the heart or skeletal muscle), the expression is specific for certain actin-rich cell types within these tissues. Expression is prominent in the cortical regions of ion-transporting duct cells in the pancreas, in the salivary parotid gland and in certain F-actin-rich cells in the distal tubule/collecting duct. In primary cultures of gastric fibroblasts, expression is mainly within the tips of lamellipodia and at the leading edges of membrane ruffles.

The protein localises to the cytoplasm. It localises to the cell cortex. The protein resides in the cytoskeleton. Plays an important role in the regulation of dynamic actin-based, cytoskeletal activities. Agonist-dependent changes in LASP1 phosphorylation may also serve to regulate actin-associated ion transport activities, not only in the parietal cell but also in certain other F-actin-rich secretory epithelial cell types. The protein is LIM and SH3 domain protein 1 of Rattus norvegicus (Rat).